Here is a 341-residue protein sequence, read N- to C-terminus: Glyceraldehyde-3-phosphate dehydrogenase 4 (341 aa).

NAD(+)-binding positions include 13–14 (RI), Asp-35, and Lys-85. Residues 157 to 159 (SCT), Thr-188, 217 to 218 (TG), and Arg-240 contribute to the D-glyceraldehyde 3-phosphate site. The active-site Nucleophile is the Cys-158. Residue Asn-322 coordinates NAD(+).

This sequence belongs to the glyceraldehyde-3-phosphate dehydrogenase family. As to quaternary structure, homotetramer.

It localises to the cytoplasm. It carries out the reaction D-glyceraldehyde 3-phosphate + phosphate + NAD(+) = (2R)-3-phospho-glyceroyl phosphate + NADH + H(+). Its pathway is carbohydrate degradation; glycolysis; pyruvate from D-glyceraldehyde 3-phosphate: step 1/5. The chain is Glyceraldehyde-3-phosphate dehydrogenase 4 (gpd-4) from Caenorhabditis elegans.